Reading from the N-terminus, the 1938-residue chain is Myosin-1 (1938 aa).

The tract at residues 1-27 (MSLEHEKDPGWQYLKRSREQQLADQSR) is disordered. The segment covering 16 to 27 (RSREQQLADQSR) has biased composition (basic and acidic residues). Residues 30–80 (DSKKNVWIPDAEEGYIEGVIKGPGPKADTVIVTAGGKDVTLKKDIVQEVNP) form the Myosin N-terminal SH3-like domain. The region spanning 84–785 (EKTEDMSNLT…VVAHIEDLRD (702 aa)) is the Myosin motor domain. Lys-128 is subject to N6,N6,N6-trimethyllysine. Residue 177 to 184 (GESGAGKT) participates in ATP binding. Actin-binding stretches follow at residues 660–682 (LNKLMTMLHKTHPHFIRCIIPNE) and 764–778 (RIGHTKVFFKAGVVA). The tract at residues 846 to 1170 (QLKCGKMAEE…NKQLEIQQDN (325 aa)) is alpha-helical tailpiece (short S2). A rodlike tail (S2 and LMM domains) region spans residues 846-1938 (QLKCGKMAEE…GQVVRSATNK (1093 aa)). Residues 846–1938 (QLKCGKMAEE…GQVVRSATNK (1093 aa)) adopt a coiled-coil conformation. Residues 919–951 (RQEVEKSLNDANDRLSEHEEKNADLEKQRRKAQ) form a disordered region. A compositionally biased stretch (basic and acidic residues) spans 920–951 (QEVEKSLNDANDRLSEHEEKNADLEKQRRKAQ). The segment at 1171–1938 (NKKKDSEIIK…GQVVRSATNK (768 aa)) is light meromyosin (LMM).

It belongs to the TRAFAC class myosin-kinesin ATPase superfamily. Myosin family. In terms of assembly, muscle myosin is a hexameric protein that consists of 2 heavy chain subunits (MHC), 2 alkali light chain subunits (MLC) and 2 regulatory light chain subunits (MLC-2). Interacts with itr-1 (via c-terminal coiled coil domain). Found exclusively in the pharyngeal muscle.

The protein localises to the cytoplasm. It localises to the myofibril. Its function is as follows. Muscle contraction. The sequence is that of Myosin-1 from Caenorhabditis elegans.